A 112-amino-acid polypeptide reads, in one-letter code: Transmembrane protein 14 homolog (112 aa).

4 consecutive transmembrane segments (helical) span residues 9–26 (FKLN…GVIG), 36–53 (LIAG…AYYL), 60–77 (VGLG…GVMG), and 87–109 (IPII…LYNI).

It belongs to the TMEM14 family.

It localises to the membrane. The chain is Transmembrane protein 14 homolog from Dictyostelium discoideum (Social amoeba).